A 271-amino-acid polypeptide reads, in one-letter code: 2,3,4,5-tetrahydropyridine-2,6-dicarboxylate N-succinyltransferase (271 aa).

Substrate contacts are provided by arginine 103 and aspartate 140.

This sequence belongs to the transferase hexapeptide repeat family. In terms of assembly, homotrimer.

It localises to the cytoplasm. The enzyme catalyses (S)-2,3,4,5-tetrahydrodipicolinate + succinyl-CoA + H2O = (S)-2-succinylamino-6-oxoheptanedioate + CoA. Its pathway is amino-acid biosynthesis; L-lysine biosynthesis via DAP pathway; LL-2,6-diaminopimelate from (S)-tetrahydrodipicolinate (succinylase route): step 1/3. The polypeptide is 2,3,4,5-tetrahydropyridine-2,6-dicarboxylate N-succinyltransferase (Methylococcus capsulatus (strain ATCC 33009 / NCIMB 11132 / Bath)).